Here is a 725-residue protein sequence, read N- to C-terminus: Ribosomal RNA large subunit methyltransferase K/L (725 aa).

Residues 45–156 enclose the THUMP domain; the sequence is SGYRACLWSR…RGRLSLGIDL (112 aa).

This sequence belongs to the methyltransferase superfamily. RlmKL family.

The protein localises to the cytoplasm. It catalyses the reaction guanosine(2445) in 23S rRNA + S-adenosyl-L-methionine = N(2)-methylguanosine(2445) in 23S rRNA + S-adenosyl-L-homocysteine + H(+). The enzyme catalyses guanosine(2069) in 23S rRNA + S-adenosyl-L-methionine = N(2)-methylguanosine(2069) in 23S rRNA + S-adenosyl-L-homocysteine + H(+). Specifically methylates the guanine in position 2445 (m2G2445) and the guanine in position 2069 (m7G2069) of 23S rRNA. In Marinobacter nauticus (strain ATCC 700491 / DSM 11845 / VT8) (Marinobacter aquaeolei), this protein is Ribosomal RNA large subunit methyltransferase K/L.